The following is an 846-amino-acid chain: Interleukin cytokine receptor-related protein 1 (846 aa).

Residues 1–25 (MFLHSPALLIWLFLFCLAGPQAVRT) form the signal peptide. The Extracellular segment spans residues 26–418 (EPYNSTSSSS…KEDTTWTWHT (393 aa)). N-linked (GlcNAc...) asparagine glycosylation is found at Asn-29, Asn-79, Asn-186, Asn-214, Asn-339, and Asn-395. A disordered region spans residues 388-409 (EKPPATSNQTEESDGKAEKDKK). Over residues 400–409 (SDGKAEKDKK) the composition is skewed to basic and acidic residues. A helical transmembrane segment spans residues 419–439 (YAITGGAIIAILFILSVCAGL). Over 440-846 (KCYKKFNNKK…AFHDEVIGIH (407 aa)) the chain is Cytoplasmic. In terms of domain architecture, SEFIR spans 476–618 (SISVLIVYSH…IPNSLMTMTT (143 aa)). The disordered stretch occupies residues 737–771 (GPIHVEPTEPEVLEPAEEPMEEAEEDEEDEDDVDS). The segment covering 744 to 771 (TEPEVLEPAEEPMEEAEEDEEDEDDVDS) has biased composition (acidic residues).

As to quaternary structure, component of a heterodimeric receptor complex composed of ilcr-1 and ilcr-2. The receptor complex interacts with actl-1 and ilc-17.1 with the interaction being mediated by ilcr-2. Expressed in most neurons.

The protein localises to the cell membrane. Its function is as follows. Forms a receptor complex together with receptor ilcr-2, which upon activation acts as a modulator of neuronal activity. Binding of the ligand ilc-17.1 to the ilcr-1/2 receptor complex triggers a signaling cascade that activates the downstream signaling components actl-1, pik-1 and nfki-1, and results in increased neuronal activity in RMG interneurons in response to input from oxygen-sensing neurons. This leads to increased animal movement and promotes aggregation behavior. This is Interleukin cytokine receptor-related protein 1 from Caenorhabditis elegans.